Reading from the N-terminus, the 366-residue chain is RNA 3'-terminal phosphate cyclase (366 aa).

Gln104, Pro131, Tyr294, Asp297, Gln298, and His320 together coordinate ATP. Residue His320 is the Tele-AMP-histidine intermediate of the active site.

The protein belongs to the RNA 3'-terminal cyclase family. Type 1 subfamily.

It localises to the nucleus. The protein localises to the nucleoplasm. The catalysed reaction is a 3'-end 3'-phospho-ribonucleotide-RNA + ATP = a 3'-end 2',3'-cyclophospho-ribonucleotide-RNA + AMP + diphosphate. Functionally, catalyzes the conversion of 3'-phosphate to a 2',3'-cyclic phosphodiester at the end of RNA. The mechanism of action of the enzyme occurs in 3 steps: (A) adenylation of the enzyme by ATP; (B) transfer of adenylate to an RNA-N3'P to produce RNA-N3'PP5'A; (C) and attack of the adjacent 2'-hydroxyl on the 3'-phosphorus in the diester linkage to produce the cyclic end product. Likely functions in some aspects of cellular RNA processing. Function plays an important role in regulating axon regeneration by inhibiting central nervous system (CNS) axon regeneration following optic nerve injury. This chain is RNA 3'-terminal phosphate cyclase (RTCA), found in Macaca fascicularis (Crab-eating macaque).